The sequence spans 415 residues: Dynein assembly factor with WD repeat domains 1 (415 aa).

8 WD repeats span residues 90–129 (AHILPLTNVALNKAGSCFITGSYDRTCKVWDTASGEELHT), 132–174 (GHRN…HTFR), 175–214 (GHTAEIVCLSFNPQSTVVATGSMDTTAKLWDIQSGEEVVT), 217–256 (GHLAEIISLSFDTSGDRIITGSFDHTVVVWDASTGRKVHT), 259–298 (GHCAEISSALFSWDCSLILTGSMDKTCMLWDATSGKCVAT), 301–340 (GHDDEILDSCFDYTGKLIATASADGTARVYNATTRKCITK), 343–384 (GHEG…QVLE), and 386–415 (HTDEIFSCAFNYKGNIVITGSKDNSCRIWR).

The protein belongs to the WD repeat WDR69 family. In terms of assembly, interacts with IFT46.

Its subcellular location is the cytoplasm. It is found in the cytoskeleton. The protein localises to the flagellum basal body. The protein resides in the flagellum axoneme. Its function is as follows. Required for axonemal dynein assembly and ciliary motility in ciliated organs, including Kupffer's vesicle, during embryogenesis. Facilitates the onset of robust cilia motility during development. The polypeptide is Dynein assembly factor with WD repeat domains 1 (Daw1) (Rattus norvegicus (Rat)).